Reading from the N-terminus, the 301-residue chain is Ribonuclease Z (301 aa).

Zn(2+) contacts are provided by H60, H62, D64, H65, H137, D207, and H265. D64 functions as the Proton acceptor in the catalytic mechanism.

Belongs to the RNase Z family. As to quaternary structure, homodimer. The cofactor is Zn(2+).

It catalyses the reaction Endonucleolytic cleavage of RNA, removing extra 3' nucleotides from tRNA precursor, generating 3' termini of tRNAs. A 3'-hydroxy group is left at the tRNA terminus and a 5'-phosphoryl group is left at the trailer molecule.. Zinc phosphodiesterase, which displays some tRNA 3'-processing endonuclease activity. Probably involved in tRNA maturation, by removing a 3'-trailer from precursor tRNA. The chain is Ribonuclease Z from Exiguobacterium sibiricum (strain DSM 17290 / CCUG 55495 / CIP 109462 / JCM 13490 / 255-15).